The chain runs to 568 residues: Matrix metalloproteinase-21 (568 aa).

The signal sequence occupies residues 1-24; the sequence is MLAASVLRLTLPLCWLVAPQPTQP. Residues 25-143 constitute a propeptide that is removed on maturation; the sequence is ERLFHSRDRS…SLGLRPRARQ (119 aa). The Cysteine switch motif lies at 110–117; that stretch reads PRCGVPDT. 2 residues coordinate Zn(2+): Cys-112 and His-282. Residue Glu-283 is part of the active site. Zn(2+) contacts are provided by His-286 and His-292. Cys-328 and Cys-559 form a disulfide bridge. Hemopexin repeat units follow at residues 329 to 388, 390 to 446, 447 to 495, and 502 to 558; these read KGSF…WRGI, TQSI…FPGI, PSPL…FPAI, and FRNL…WFDV. N-linked (GlcNAc...) asparagine glycosylation occurs at Asn-371.

It belongs to the peptidase M10A family. Zn(2+) is required as a cofactor. The cofactor is Ca(2+). The precursor is cleaved by a furin endopeptidase.

The protein localises to the secreted. Plays a specialized role in the generation of left-right asymmetry during embryogenesis. May act as a negative regulator of the NOTCH-signaling pathway. Cleaves alpha-1-antitrypsin. The protein is Matrix metalloproteinase-21 (Mmp21) of Mus musculus (Mouse).